The primary structure comprises 851 residues: Beta-galactosidase 3 (851 aa).

The signal sequence occupies residues 1–29; that stretch reads MAGASSYFSLRRLLLLLLPLVPLLGATTA. Asparagine 35 is a glycosylation site (N-linked (GlcNAc...) asparagine). Glutamate 194 serves as the catalytic Proton donor. Glutamate 263 (nucleophile) is an active-site residue. N-linked (GlcNAc...) asparagine glycosylation is found at asparagine 361, asparagine 475, asparagine 528, and asparagine 533. One can recognise an SUEL-type lectin domain in the interval 765 to 851; the sequence is GRDAAKVQLS…KTLAIEADCS (87 aa).

It belongs to the glycosyl hydrolase 35 family.

Its subcellular location is the secreted. It localises to the extracellular space. It is found in the apoplast. The catalysed reaction is Hydrolysis of terminal non-reducing beta-D-galactose residues in beta-D-galactosides.. The sequence is that of Beta-galactosidase 3 from Oryza sativa subsp. japonica (Rice).